Here is a 179-residue protein sequence, read N- to C-terminus: Natural killer cells antigen CD94 (179 aa).

Over 1-10 the chain is Cytoplasmic; that stretch reads MAVSQTTLWN. The helical; Signal-anchor for type II membrane protein transmembrane segment at 11 to 31 threads the bilayer; sequence LISGILGVICLLLMTTMGILL. Topologically, residues 32–179 are extracellular; that stretch reads KNLLLTESIQ…SRFICKQELM (148 aa). Intrachain disulfides connect Cys58-Cys70, Cys61-Cys72, Cys89-Cys174, and Cys152-Cys166. The C-type lectin domain maps to 68–175; the sequence is HQCNCYLFFD…CEDKSRFICK (108 aa). Asn93 and Asn125 each carry an N-linked (GlcNAc...) asparagine glycan.

In terms of assembly, can form disulfide-bonded heterodimer with NKG2 family members KLRC1 and KLRC2. KLRD1-KLRC1 heterodimer interacts with peptide-bound MHC-E-B2M heterotrimeric complex. KLRD1 plays a prominent role in directly interacting with MHC-E. KLRD1-KLRC1 interacts with much higher affinity with peptide-bound MHC-E-B2M than KLRD1-KLRC2. Interacts with the adapter protein TYROBP/DAP12; this interaction is required for cell surface expression and cell activation.

Its subcellular location is the cell membrane. Immune receptor involved in self-nonself discrimination. In complex with KLRC1 or KLRC2 on cytotoxic and regulatory lymphocyte subsets, recognizes non-classical major histocompatibility (MHC) class Ib molecule MHC-E loaded with self-peptides derived from the signal sequence of classical MHC class Ia and non-classical MHC class Ib molecules. Enables cytotoxic cells to monitor the expression of MHC class I molecules in healthy cells and to tolerate self. Primarily functions as a ligand binding subunit as it lacks the capacity to signal. Functionally, KLRD1-KLRC1 acts as an immune inhibitory receptor. Key inhibitory receptor on natural killer (NK) cells that regulates their activation and effector functions. Dominantly counteracts T cell receptor signaling on a subset of memory/effector CD8-positive T cells as part of an antigen-driven response to avoid autoimmunity. On intraepithelial CD8-positive gamma-delta regulatory T cells triggers TGFB1 secretion, which in turn limits the cytotoxic programming of intraepithelial CD8-positive alpha-beta T cells, distinguishing harmless from pathogenic antigens. In MHC-E-rich tumor microenvironment, acts as an immune inhibitory checkpoint and may contribute to progressive loss of effector functions of NK cells and tumor-specific T cells, a state known as cell exhaustion. Upon MHC-E-peptide binding, transmits intracellular signals through KLRC1 immunoreceptor tyrosine-based inhibition motifs (ITIMs) by recruiting INPP5D/SHIP-1 and INPPL1/SHIP-2 tyrosine phosphatases to ITIMs, and ultimately opposing signals transmitted by activating receptors through dephosphorylation of proximal signaling molecules. In terms of biological role, KLRD1-KLRC2 acts as an immune activating receptor. On cytotoxic lymphocyte subsets recognizes MHC-E loaded with signal sequence-derived peptides from non-classical MHC class Ib MHC-G molecules, likely playing a role in the generation and effector functions of adaptive NK cells and in maternal-fetal tolerance during pregnancy. Regulates the effector functions of terminally differentiated cytotoxic lymphocyte subsets, and in particular may play a role in adaptive NK cell response to viral infection. Upon MHC-E-peptide binding, transmits intracellular signals via the adapter protein TYROBP/DAP12, triggering the phosphorylation of proximal signaling molecules and cell activation. This chain is Natural killer cells antigen CD94 (KLRD1), found in Canis lupus familiaris (Dog).